The chain runs to 187 residues: Intraflagellar transport protein 22 homolog (187 aa).

GTP is bound by residues 10-17 (GPSECGKT), 65-69 (DCAGD), and 125-128 (HKPG).

It belongs to the small GTPase superfamily. Rab family.

This Danio rerio (Zebrafish) protein is Intraflagellar transport protein 22 homolog (ift22).